The sequence spans 306 residues: UDP-3-O-acyl-N-acetylglucosamine deacetylase (306 aa).

Zn(2+) contacts are provided by His79, His238, and Asp242. His265 acts as the Proton donor in catalysis.

It belongs to the LpxC family. Zn(2+) serves as cofactor.

The enzyme catalyses a UDP-3-O-[(3R)-3-hydroxyacyl]-N-acetyl-alpha-D-glucosamine + H2O = a UDP-3-O-[(3R)-3-hydroxyacyl]-alpha-D-glucosamine + acetate. Its pathway is glycolipid biosynthesis; lipid IV(A) biosynthesis; lipid IV(A) from (3R)-3-hydroxytetradecanoyl-[acyl-carrier-protein] and UDP-N-acetyl-alpha-D-glucosamine: step 2/6. In terms of biological role, catalyzes the hydrolysis of UDP-3-O-myristoyl-N-acetylglucosamine to form UDP-3-O-myristoylglucosamine and acetate, the committed step in lipid A biosynthesis. The polypeptide is UDP-3-O-acyl-N-acetylglucosamine deacetylase (Shewanella halifaxensis (strain HAW-EB4)).